A 62-amino-acid polypeptide reads, in one-letter code: Large ribosomal subunit protein uL30 (62 aa).

Belongs to the universal ribosomal protein uL30 family. As to quaternary structure, part of the 50S ribosomal subunit.

The protein is Large ribosomal subunit protein uL30 of Halalkalibacterium halodurans (strain ATCC BAA-125 / DSM 18197 / FERM 7344 / JCM 9153 / C-125) (Bacillus halodurans).